We begin with the raw amino-acid sequence, 798 residues long: Protocadherin beta-14 (798 aa).

The first 26 residues, 1-26, serve as a signal peptide directing secretion; the sequence is MEIRGALDLRKRQVLIFLVLLGLSRA. Topologically, residues 27–686 are extracellular; it reads GTESAHYSVA…APAQAQADSL (660 aa). 5 Cadherin domains span residues 35–133, 138–242, 247–347, 352–451, and 456–561; these read VAEE…SPTF, ILIK…APEF, YEVQ…PPEV, ITKR…APAF, and YTLF…SPFV. Cysteines 96 and 102 form a disulfide. The N-linked (GlcNAc...) asparagine glycan is linked to N169. Residues N359, N418, and N436 are each glycosylated (N-linked (GlcNAc...) asparagine). An N-linked (GlcNAc...) asparagine glycan is attached at N567. A Cadherin 6 domain is found at 568 to 671; the sequence is GSAPCTELVP…LVDGFSQPYL (104 aa). Residues 687 to 711 form a helical membrane-spanning segment; the sequence is TVYLVVALASVSSLFLFSVLLFVAV. Over 712–798 the chain is Cytoplasmic; that stretch reads RLCRRSRAAS…FRNSFGLNIQ (87 aa).

It localises to the cell membrane. Its function is as follows. Potential calcium-dependent cell-adhesion protein. May be involved in the establishment and maintenance of specific neuronal connections in the brain. This chain is Protocadherin beta-14 (PCDHB14), found in Pan troglodytes (Chimpanzee).